The chain runs to 290 residues: Bifunctional protein FolD (290 aa).

NADP(+)-binding positions include 166–168 (GAS) and isoleucine 232.

The protein belongs to the tetrahydrofolate dehydrogenase/cyclohydrolase family. In terms of assembly, homodimer.

It catalyses the reaction (6R)-5,10-methylene-5,6,7,8-tetrahydrofolate + NADP(+) = (6R)-5,10-methenyltetrahydrofolate + NADPH. The catalysed reaction is (6R)-5,10-methenyltetrahydrofolate + H2O = (6R)-10-formyltetrahydrofolate + H(+). The protein operates within one-carbon metabolism; tetrahydrofolate interconversion. Catalyzes the oxidation of 5,10-methylenetetrahydrofolate to 5,10-methenyltetrahydrofolate and then the hydrolysis of 5,10-methenyltetrahydrofolate to 10-formyltetrahydrofolate. This Proteus mirabilis (strain HI4320) protein is Bifunctional protein FolD.